We begin with the raw amino-acid sequence, 297 residues long: Formamidopyrimidine-DNA glycosylase (297 aa).

Proline 2 (schiff-base intermediate with DNA) is an active-site residue. The Proton donor role is filled by glutamate 3. The active-site Proton donor; for beta-elimination activity is the lysine 58. DNA is bound by residues histidine 106, arginine 133, and arginine 178. Residues 263–297 form an FPG-type zinc finger; sequence FVYDRAGEPCRICGTPIRQILQGQRSTFYCPHCQH. The active-site Proton donor; for delta-elimination activity is arginine 287.

This sequence belongs to the FPG family. As to quaternary structure, monomer. The cofactor is Zn(2+).

The catalysed reaction is Hydrolysis of DNA containing ring-opened 7-methylguanine residues, releasing 2,6-diamino-4-hydroxy-5-(N-methyl)formamidopyrimidine.. It carries out the reaction 2'-deoxyribonucleotide-(2'-deoxyribose 5'-phosphate)-2'-deoxyribonucleotide-DNA = a 3'-end 2'-deoxyribonucleotide-(2,3-dehydro-2,3-deoxyribose 5'-phosphate)-DNA + a 5'-end 5'-phospho-2'-deoxyribonucleoside-DNA + H(+). Its function is as follows. Involved in base excision repair of DNA damaged by oxidation or by mutagenic agents. Acts as a DNA glycosylase that recognizes and removes damaged bases. Has a preference for oxidized purines, such as 7,8-dihydro-8-oxoguanine (8-oxoG). Has AP (apurinic/apyrimidinic) lyase activity and introduces nicks in the DNA strand. Cleaves the DNA backbone by beta-delta elimination to generate a single-strand break at the site of the removed base with both 3'- and 5'-phosphates. The protein is Formamidopyrimidine-DNA glycosylase of Cupriavidus metallidurans (strain ATCC 43123 / DSM 2839 / NBRC 102507 / CH34) (Ralstonia metallidurans).